The chain runs to 883 residues: MSKTHVYELAKKMGIENKELLTRLKSLGIEVKNHLSVLEEDEILKVTAPPAAPPKSGPQEEVRVTTTVIRRRRVAEAAPAETPVEAVAPPVESAPAPLEVEAVEEAVVQAPPVVEPPVARESEAAPAEEPVAAAVKPASEPPVVQKAPVAPAAPPVDDKPTANKARILGRVELPGITTPAPKPADRREATAPKKRIEERIMTPSPTDRPAPAGDDRRKAGTPPPPPRKGKEFVAPAEPERGAKKPGGGGAGKKKEAFKKTELLEKRERIFEPGPKTGKGKKRERDMVSLGRKTEITVPKAIKRIIKISESITVGELAKRMGVKATDLIRVLMKMGMMVTINHPLDVDTATLVASEFGYEIENVAIDVDEMLESVPDAPESLTKRPPVVTIMGHVDHGKTSLLDAIREANVIAGEAGGITQHIGAYDVELNGRKITFLDTPGHEAFTAMRARGAKVTDIVILVVAADDGVMPQTREAVNHSKAAGVPIIVAINKIDKPEAKPERVKQELMEFGLVSEEWGGETIFVEVSAKKRINLPELLEMVLLQADVMDLKANPDKDARGTIVEAKLDRGRGPVATVLVQEGTLKIGDYFVAGVNSGRVRAMQNDRGDKVNEAGPSMPVEVIGFTGVPDAGDVFISLVDEKRAKEIASHRQQKLRETELAKHSKMSLEQLYDKIQKGEVKDLNAIVKADVQGSVEAVSESLRKLSTDAVRLNVIHSSVGAITETDVNLASASNAIILGFNVRPEPKASAHAEKEGVDIRLYNIIYDAVEDIKKAMEGLLEPTLREKYLGRAEVREVFSVPKVGNVAGCYIQDGKMIRNAQVRLLRDNVVIYEGKMSSLRRFKDDVKEVATGYECGIGLENYNDIKVGDVIEDFEIEKIATTL.

The segment at 118–261 is disordered; it reads VARESEAAPA…KKKEAFKKTE (144 aa). Residues 124-150 are compositionally biased toward low complexity; it reads AAPAEEPVAAAVKPASEPPVVQKAPVA. 2 stretches are compositionally biased toward basic and acidic residues: residues 183–200 and 252–261; these read PADR…EERI and KKKEAFKKTE. Residues 383-552 form the tr-type G domain; it reads KRPPVVTIMG…LLQADVMDLK (170 aa). The interval 392 to 399 is G1; it reads GHVDHGKT. 392–399 contributes to the GTP binding site; the sequence is GHVDHGKT. The G2 stretch occupies residues 417-421; sequence GITQH. A G3 region spans residues 438-441; sequence DTPG. GTP-binding positions include 438–442 and 492–495; these read DTPGH and NKID. The interval 492–495 is G4; that stretch reads NKID. Positions 528–530 are G5; it reads SAK.

The protein belongs to the TRAFAC class translation factor GTPase superfamily. Classic translation factor GTPase family. IF-2 subfamily.

It is found in the cytoplasm. Functionally, one of the essential components for the initiation of protein synthesis. Protects formylmethionyl-tRNA from spontaneous hydrolysis and promotes its binding to the 30S ribosomal subunits. Also involved in the hydrolysis of GTP during the formation of the 70S ribosomal complex. In Geobacter sulfurreducens (strain ATCC 51573 / DSM 12127 / PCA), this protein is Translation initiation factor IF-2.